Here is an 88-residue protein sequence, read N- to C-terminus: Small ribosomal subunit protein uS15 (88 aa).

It belongs to the universal ribosomal protein uS15 family. Part of the 30S ribosomal subunit. Forms a bridge to the 50S subunit in the 70S ribosome, contacting the 23S rRNA.

In terms of biological role, one of the primary rRNA binding proteins, it binds directly to 16S rRNA where it helps nucleate assembly of the platform of the 30S subunit by binding and bridging several RNA helices of the 16S rRNA. Forms an intersubunit bridge (bridge B4) with the 23S rRNA of the 50S subunit in the ribosome. The polypeptide is Small ribosomal subunit protein uS15 (Verminephrobacter eiseniae (strain EF01-2)).